We begin with the raw amino-acid sequence, 227 residues long: Adenylate kinase (227 aa).

Gly21 to Thr26 contacts ATP. The interval Ala41–Val70 is NMP. Residues Thr42, Arg47, Lys68–Val70, Gly97–Arg100, and Gln104 each bind AMP. The tract at residues Gly138–Asp175 is LID. ATP-binding positions include Arg139 and Ser148–Tyr149. Residues Arg172 and Arg183 each contribute to the AMP site. Gln211 contacts ATP.

The protein belongs to the adenylate kinase family. AK2 subfamily. As to quaternary structure, monomer.

Its subcellular location is the cytoplasm. The protein resides in the cytosol. It is found in the mitochondrion intermembrane space. The enzyme catalyses AMP + ATP = 2 ADP. In terms of biological role, catalyzes the reversible transfer of the terminal phosphate group between ATP and AMP. Plays an important role in cellular energy homeostasis and in adenine nucleotide metabolism. Adenylate kinase activity is critical for regulation of the phosphate utilization and the AMP de novo biosynthesis pathways. This is Adenylate kinase from Kluyveromyces lactis (strain ATCC 8585 / CBS 2359 / DSM 70799 / NBRC 1267 / NRRL Y-1140 / WM37) (Yeast).